A 552-amino-acid chain; its full sequence is Probable acyl-activating enzyme 5, peroxisomal (552 aa).

The short motif at 550 to 552 is the Microbody targeting signal element; the sequence is SRM.

This sequence belongs to the ATP-dependent AMP-binding enzyme family. As to expression, expressed in roots, stems and developing seeds.

It is found in the peroxisome. May act as an acid--thiol ligase that activates carboxylic acids by forming acyl-CoAs. The chain is Probable acyl-activating enzyme 5, peroxisomal (AAE5) from Arabidopsis thaliana (Mouse-ear cress).